A 433-amino-acid polypeptide reads, in one-letter code: Eukaryotic peptide chain release factor subunit 1 (433 aa).

Gln-182 carries the post-translational modification N5-methylglutamine. Ser-425 carries the phosphoserine modification.

The protein belongs to the eukaryotic release factor 1 family. As to quaternary structure, component of the eRF1-eRF3-GTP ternary complex, composed of sup45/eRF1, sup35/eRF3 and GTP.

Its subcellular location is the cytoplasm. Component of the eRF1-eRF3-GTP ternary complex, a ternary complex that mediates translation termination in response to the termination codons. The eRF1-eRF3-GTP complex binds to a stop codon in the ribosomal A-site. Sup45/eRF1 is responsible for stop codon recognition and inducing hydrolysis of peptidyl-tRNA. Following GTP hydrolysis by sup35/eRF3, sup35/eRF3 dissociates, permitting sup45/eRF1 to accommodate fully in the A-site. This Schizosaccharomyces pombe (strain 972 / ATCC 24843) (Fission yeast) protein is Eukaryotic peptide chain release factor subunit 1 (sup45).